The sequence spans 86 residues: Progonadoliberin-2 (86 aa).

The signal sequence occupies residues 1–24 (MVHICRLLVLMGMLLCLSAQFASS). Position 25 is a pyrrolidone carboxylic acid (Gln-25). Glycine amide is present on Gly-34.

This sequence belongs to the GnRH family.

It is found in the secreted. Functionally, stimulates the secretion of gonadotropins. This is Progonadoliberin-2 (gnrh2) from Rutilus rutilus (Roach).